The following is a 361-amino-acid chain: MAMNYNAKDEVDGGPPCPPGGTAKTRRPDNTAFKQQRLPAWQPILTAGTVLPTFFIIGLIFIPIGIGIFVTSNNIREIEIDYTGTDPSSPCNKCLSPNVTPCVCTINFTLEQSFEGNVFMYYGLSNFYQNHRRYVKSRDDGQLNGDPSALLNPSKECEPYRRNEDKPIAPCGAIANSMFNDTLELFQVGNASDLTPIPLKKKGIAWWTDKNVKFRNPPGTDPLEERFKGTTKPVNWVKPVYMLDSDEDNNGFINEDFIVWMRTAALPTFRKLYRLIERKNDLHPTLPAGRYYLNITYNYPVHSFDGRKRMILSTISWMGGKNPFLGIAYITIGSISFLLGVVLLVINHKYRNSSNTADITI.

The disordered stretch occupies residues 1 to 28; it reads MAMNYNAKDEVDGGPPCPPGGTAKTRRP. A2 is modified (N-acetylalanine). Positions 2–48 are required for ATPase and aminophospholipid flippase activity; it reads AMNYNAKDEVDGGPPCPPGGTAKTRRPDNTAFKQQRLPAWQPILTAG. The Cytoplasmic portion of the chain corresponds to 2–49; sequence AMNYNAKDEVDGGPPCPPGGTAKTRRPDNTAFKQQRLPAWQPILTAGT. The segment at 49–348 is interaction with ATP8A2; it reads TVLPTFFIIG…LGVVLLVINH (300 aa). Residues 50–70 traverse the membrane as a helical segment; it reads VLPTFFIIGLIFIPIGIGIFV. Over 71 to 325 the chain is Exoplasmic loop; that stretch reads TSNNIREIEI…SWMGGKNPFL (255 aa). Intrachain disulfides connect C91–C104, C94–C102, and C157–C171. N-linked (GlcNAc...) asparagine glycosylation is found at N180, N190, and N294. Residues 326 to 346 form a helical membrane-spanning segment; sequence GIAYITIGSISFLLGVVLLVI. At 347–361 the chain is on the cytoplasmic side; the sequence is NHKYRNSSNTADITI.

This sequence belongs to the CDC50/LEM3 family. As to quaternary structure, component of various P4-ATPase flippase complexes which consists of a catalytic alpha subunit and an accessory beta subunit. Interacts with ATP8A1 to form a flippase complex; this complex forms an intermediate phosphoenzyme. Interacts with ATP8A2 to form a flippase complex. ATP8B1:TMEM30A and ATP8B2:TMEM30A flippase complexes have been shown to form intermediate phosphoenzymes in vitro. Interacts with alpha subunits ATP8A1, ATP8B1, ATP8B2, ATP8B4, ATP10A, ATP10B, ATP10D, ATP11A, ATP11B and ATP11C. In terms of processing, N-glycosylated; contributes to ATP8A2:TMEM30A flippase complex assembly but not to functional activity. In terms of tissue distribution, expressed in photoreceptor cells; detected in retina outer segment and other retinal layers (at protein level).

It is found in the membrane. Its subcellular location is the golgi apparatus. The protein resides in the cytoplasmic vesicle. The protein localises to the secretory vesicle membrane. It localises to the apical cell membrane. It is found in the photoreceptor inner segment. Its subcellular location is the cell projection. The protein resides in the cilium. The protein localises to the photoreceptor outer segment. Its function is as follows. Accessory component of a P4-ATPase flippase complex which catalyzes the hydrolysis of ATP coupled to the transport of aminophospholipids from the outer to the inner leaflet of various membranes and ensures the maintenance of asymmetric distribution of phospholipids. Phospholipid translocation also seems to be implicated in vesicle formation and in uptake of lipid signaling molecules. The beta subunit may assist in binding of the phospholipid substrate. Required for the proper folding, assembly and ER to Golgi exit of the ATP8A2:TMEM30A flippase complex. ATP8A2:TMEM30A may be involved in regulation of neurite outgrowth, and, reconstituted to liposomes, predomiminantly transports phosphatidylserine (PS) and to a lesser extent phosphatidylethanolamine (PE). The ATP8A1:TMEM30A flippase complex seems to play a role in regulation of cell migration probably involving flippase-mediated translocation of phosphatidylethanolamine (PE) at the plasma membrane. Required for the formation of the ATP8A2, ATP8B1 and ATP8B2 P-type ATPAse intermediate phosphoenzymes. Involved in uptake of platelet-activating factor (PAF). Can also mediate the export of alpha subunits ATP8A1, ATP8B1, ATP8B2, ATP8B4, ATP10A, ATP10B, ATP10D, ATP11A, ATP11B and ATP11C from the ER to other membrane localizations. This is Cell cycle control protein 50A from Bos taurus (Bovine).